A 298-amino-acid chain; its full sequence is Bifunctional protein FolD (298 aa).

Residues 166–168, S195, and I236 contribute to the NADP(+) site; that span reads GRS.

Belongs to the tetrahydrofolate dehydrogenase/cyclohydrolase family. In terms of assembly, homodimer.

It catalyses the reaction (6R)-5,10-methylene-5,6,7,8-tetrahydrofolate + NADP(+) = (6R)-5,10-methenyltetrahydrofolate + NADPH. The catalysed reaction is (6R)-5,10-methenyltetrahydrofolate + H2O = (6R)-10-formyltetrahydrofolate + H(+). Its pathway is one-carbon metabolism; tetrahydrofolate interconversion. Catalyzes the oxidation of 5,10-methylenetetrahydrofolate to 5,10-methenyltetrahydrofolate and then the hydrolysis of 5,10-methenyltetrahydrofolate to 10-formyltetrahydrofolate. The polypeptide is Bifunctional protein FolD (Chlorobium phaeobacteroides (strain BS1)).